Consider the following 410-residue polypeptide: Elongation factor Tu (410 aa).

The tr-type G domain maps to 10–214 (KPHVNIGTIG…EVDAYIPTPE (205 aa)). Residues 19–26 (GHVDHGKT) form a G1 region. 19-26 (GHVDHGKT) contributes to the GTP binding site. Thr26 is a Mg(2+) binding site. A G2 region spans residues 60–64 (GITIN). The interval 81-84 (DCPG) is G3. Residues 81-85 (DCPGH) and 136-139 (NKED) each bind GTP. The interval 136–139 (NKED) is G4. Residues 174 to 176 (SAL) are G5.

The protein belongs to the TRAFAC class translation factor GTPase superfamily. Classic translation factor GTPase family. EF-Tu/EF-1A subfamily. In terms of assembly, monomer.

It localises to the cytoplasm. The enzyme catalyses GTP + H2O = GDP + phosphate + H(+). In terms of biological role, GTP hydrolase that promotes the GTP-dependent binding of aminoacyl-tRNA to the A-site of ribosomes during protein biosynthesis. The chain is Elongation factor Tu from Gloeothece citriformis (strain PCC 7424) (Cyanothece sp. (strain PCC 7424)).